The chain runs to 150 residues: C-type natriuretic peptide (150 aa).

The first 31 residues, 1-31 (MSISSSSSSSSSSSSCLLLISLMLLAASCQG), serve as a signal peptide directing secretion. Positions 32–127 (RPDLQHRNHK…RKMFRGRTKK (96 aa)) are excised as a propeptide. The segment covering 60–73 (GAADGSSGEEAALS) has biased composition (low complexity). The tract at residues 60-109 (GAADGSSGEEAALSQRAPPSIRALHPRSGRLGLRDDLEAEPPAENKPRRR) is disordered. A disulfide bridge connects residues Cys-134 and Cys-150.

It belongs to the natriuretic peptide family. In terms of tissue distribution, expressed in brain, but not in atrium or ventricle.

The protein localises to the secreted. Hormone which plays a role in endochondral ossification through regulation of cartilaginous growth plate chondrocytes proliferation and differentiation. May also be vasoactive and natriuretic. The chain is C-type natriuretic peptide (cnp) from Acipenser transmontanus (White sturgeon).